A 163-amino-acid polypeptide reads, in one-letter code: Cyclic pyranopterin monophosphate synthase (163 aa).

Substrate-binding positions include 75–77 (MCH) and 115–116 (ME). Residue aspartate 130 is part of the active site.

This sequence belongs to the MoaC family. In terms of assembly, homohexamer; trimer of dimers.

The catalysed reaction is (8S)-3',8-cyclo-7,8-dihydroguanosine 5'-triphosphate = cyclic pyranopterin phosphate + diphosphate. It participates in cofactor biosynthesis; molybdopterin biosynthesis. Its function is as follows. Catalyzes the conversion of (8S)-3',8-cyclo-7,8-dihydroguanosine 5'-triphosphate to cyclic pyranopterin monophosphate (cPMP). The polypeptide is Cyclic pyranopterin monophosphate synthase (Bacillus pumilus (strain SAFR-032)).